Reading from the N-terminus, the 470-residue chain is Poly(A) polymerase catalytic subunit (470 aa).

Residues D192 and D194 contribute to the active site.

This sequence belongs to the poxviridae poly(A) polymerase catalytic subunit family. As to quaternary structure, heterodimer of a large (catalytic) subunit and a small (regulatory) subunit.

The enzyme catalyses RNA(n) + ATP = RNA(n)-3'-adenine ribonucleotide + diphosphate. Polymerase that creates the 3'-poly(A) tail of mRNA's. This chain is Poly(A) polymerase catalytic subunit (PAPL), found in Myxoma virus (strain Lausanne) (MYXV).